The following is a 312-amino-acid chain: tRNA dimethylallyltransferase (312 aa).

13-20 (GPTAVGKT) provides a ligand contact to ATP. 15-20 (TAVGKT) lines the substrate pocket. Interaction with substrate tRNA stretches follow at residues 38 to 41 (DSVQ) and 163 to 167 (QRVVR).

This sequence belongs to the IPP transferase family. In terms of assembly, monomer. The cofactor is Mg(2+).

The catalysed reaction is adenosine(37) in tRNA + dimethylallyl diphosphate = N(6)-dimethylallyladenosine(37) in tRNA + diphosphate. Functionally, catalyzes the transfer of a dimethylallyl group onto the adenine at position 37 in tRNAs that read codons beginning with uridine, leading to the formation of N6-(dimethylallyl)adenosine (i(6)A). The protein is tRNA dimethylallyltransferase of Exiguobacterium sibiricum (strain DSM 17290 / CCUG 55495 / CIP 109462 / JCM 13490 / 255-15).